Consider the following 528-residue polypeptide: NAC domain-containing protein 13 (528 aa).

The 151-residue stretch at 10–160 (LAPGFRFHPT…AYVLYKIYKK (151 aa)) folds into the NAC domain. A DNA-binding region spans residues 107-166 (VGEKKTLVFHRGRAPNGERTNWVMHEYTLHKEELKRCGGEDVKDAYVLYKIYKKSGSGPK). A disordered region spans residues 388–419 (EAPGTGDSSEFLNPVPSGISTTNEDDPSKDES). A helical membrane pass occupies residues 499 to 519 (FFCLSIIGALCALFWVIIGTM).

Interacts with RCD1. Expressed in roots, rosette leaves, shoot apex, stems and flowers.

It is found in the endoplasmic reticulum membrane. The protein resides in the nucleus. Functionally, transcriptional activator activated by proteolytic cleavage through regulated intramembrane proteolysis (RIP). Involved in oxidative stress tolerance by mediating regulation of mitochondrial retrograde signaling during mitochondrial dysfunction. Interacts directly with the mitochondrial dysfunction DNA consensus motif 5'-CTTGNNNNNCA[AC]G-3', a cis-regulatory elements of several mitochondrial retrograde regulation-induced genes, and triggers increased oxidative stress tolerance. The protein is NAC domain-containing protein 13 of Arabidopsis thaliana (Mouse-ear cress).